A 65-amino-acid polypeptide reads, in one-letter code: UPF0434 protein IL1511 (65 aa).

It belongs to the UPF0434 family.

This chain is UPF0434 protein IL1511, found in Idiomarina loihiensis (strain ATCC BAA-735 / DSM 15497 / L2-TR).